A 282-amino-acid polypeptide reads, in one-letter code: HTH-type transcriptional activator RhaR (282 aa).

Residues 179 to 277 (DKLITALANS…GMTPSQWRHL (99 aa)) enclose the HTH araC/xylS-type domain. DNA-binding regions (H-T-H motif) lie at residues 196–217 (DAFC…RAQT) and 244–267 (ISEI…TRET).

As to quaternary structure, binds DNA as a dimer.

It is found in the cytoplasm. Functionally, activates expression of the rhaSR operon in response to L-rhamnose. The sequence is that of HTH-type transcriptional activator RhaR from Salmonella agona (strain SL483).